Here is a 160-residue protein sequence, read N- to C-terminus: Cytosolic iron-sulfur assembly component 2A (160 aa).

The Zn(2+) site is built by histidine 89, histidine 123, glutamate 150, and glutamate 153.

It belongs to the MIP18 family. As to quaternary structure, monomer and homodimer. Component of the CIA complex. Interacts with CIAO1. Interacts with IREB2. Interacts with APAF1.

It localises to the cytoplasm. Its function is as follows. Component of the cytosolic iron-sulfur protein assembly (CIA) complex, a multiprotein complex that mediates the incorporation of iron-sulfur cluster into extramitochondrial Fe/S proteins. As a CIA complex component and in collaboration with CIAO1 specifically matures ACO1 and stabilizes IREB2, connecting cytosolic iron-sulfur protein maturation with cellular iron regulation. May play a role in chromosome segregation through establishment of sister chromatid cohesion. May induce apoptosis in collaboration with APAF1. The chain is Cytosolic iron-sulfur assembly component 2A from Bos taurus (Bovine).